The sequence spans 423 residues: Ferrochelatase, mitochondrial (423 aa).

The N-terminal 29 residues, 1 to 29 (MISRKIISTINSKTFYNKSLSYCTVNNNK), are a transit peptide targeting the mitochondrion. Position 173 (cysteine 173) interacts with [2Fe-2S] cluster. Residues histidine 207 and aspartate 380 contribute to the active site. [2Fe-2S] cluster-binding residues include cysteine 401, cysteine 404, and cysteine 411.

This sequence belongs to the ferrochelatase family. Monomer. [2Fe-2S] cluster serves as cofactor.

Its subcellular location is the mitochondrion inner membrane. It catalyses the reaction heme b + 2 H(+) = protoporphyrin IX + Fe(2+). It participates in porphyrin-containing compound metabolism; protoheme biosynthesis; protoheme from protoporphyrin-IX: step 1/1. Functionally, catalyzes the ferrous insertion into protoporphyrin IX. In Dictyostelium discoideum (Social amoeba), this protein is Ferrochelatase, mitochondrial (hemH).